Here is a 186-residue protein sequence, read N- to C-terminus: Probable RNA 2'-phosphotransferase (186 aa).

The protein belongs to the KptA/TPT1 family.

Removes the 2'-phosphate from RNA via an intermediate in which the phosphate is ADP-ribosylated by NAD followed by a presumed transesterification to release the RNA and generate ADP-ribose 1''-2''-cyclic phosphate (APPR&gt;P). May function as an ADP-ribosylase. This chain is Probable RNA 2'-phosphotransferase, found in Agrobacterium fabrum (strain C58 / ATCC 33970) (Agrobacterium tumefaciens (strain C58)).